We begin with the raw amino-acid sequence, 102 residues long: Spexin prohormone 1 (102 aa).

The first 26 residues, 1 to 26, serve as a signal peptide directing secretion; that stretch reads MKDLRTLAAYALALLLLATFVSYSRS. A propeptide spanning residues 27 to 35 is cleaved from the precursor; that stretch reads APMGSFQRR. Residue Gln49 is modified to Glutamine amide. A propeptide spanning residues 50–102 is cleaved from the precursor; the sequence is GRRFVSEDRNEGDLYDTIRLESQSQNTENLSISKAAAFLLNVLQQARDEGEPY.

The protein belongs to the spexin family. Expressed in the anterior hypothalamus, ventromedial thalamic nucleus and medial longitudinal fasciculus of the brain (at protein level). Widely expressed. Expressed predominantly in the spleen, kidney, liver and testis. Expressed in olfactory bulb, pituitary, telencephalon, diencephalons, spinal cord, optic tectum, cerebellum and hypothalamus of the brain.

The protein resides in the secreted. It is found in the extracellular space. Its subcellular location is the cytoplasmic vesicle. The protein localises to the secretory vesicle. Plays a role in the regulation of food intake and body weight and in reproduction. May also play a role as a central modulator of cardiovascular and renal function and nociception. In terms of biological role, brain administration of the peptide inhibits food consumption. May function as a satiety factor for feeding control. Involved in the negative regulation of the reproductive axis by inhibiting luteinizing hormone secretion from pituitary cells. This is Spexin prohormone 1 (spx) from Carassius auratus (Goldfish).